Consider the following 286-residue polypeptide: 4-diphosphocytidyl-2-C-methyl-D-erythritol kinase (286 aa).

The active site involves Lys-11. ATP is bound at residue 93-103; that stretch reads PFGAGLGGGSS. Asp-135 is an active-site residue.

It belongs to the GHMP kinase family. IspE subfamily.

The enzyme catalyses 4-CDP-2-C-methyl-D-erythritol + ATP = 4-CDP-2-C-methyl-D-erythritol 2-phosphate + ADP + H(+). The protein operates within isoprenoid biosynthesis; isopentenyl diphosphate biosynthesis via DXP pathway; isopentenyl diphosphate from 1-deoxy-D-xylulose 5-phosphate: step 3/6. Functionally, catalyzes the phosphorylation of the position 2 hydroxy group of 4-diphosphocytidyl-2C-methyl-D-erythritol. This is 4-diphosphocytidyl-2-C-methyl-D-erythritol kinase from Chlorobium phaeobacteroides (strain BS1).